The primary structure comprises 140 residues: MATERTLSIIKPDATRRNLTGKINAVFEDAGLRIVAQKRVQLSEAEAGAFYAVHKDRPFYGELVSFMVSGPVVLQVLEGENAVLKHRDVMGATDPKKAAPGTVRAQFAESIEANSVHGSDSLENANTEIAFFFAQTEILP.

ATP is bound by residues Lys-11, Phe-59, Arg-87, Thr-93, Arg-104, and Asn-114. His-117 acts as the Pros-phosphohistidine intermediate in catalysis.

Belongs to the NDK family. As to quaternary structure, homotetramer. Mg(2+) is required as a cofactor.

The protein resides in the cytoplasm. It catalyses the reaction a 2'-deoxyribonucleoside 5'-diphosphate + ATP = a 2'-deoxyribonucleoside 5'-triphosphate + ADP. The catalysed reaction is a ribonucleoside 5'-diphosphate + ATP = a ribonucleoside 5'-triphosphate + ADP. Major role in the synthesis of nucleoside triphosphates other than ATP. The ATP gamma phosphate is transferred to the NDP beta phosphate via a ping-pong mechanism, using a phosphorylated active-site intermediate. This is Nucleoside diphosphate kinase from Gluconacetobacter diazotrophicus (strain ATCC 49037 / DSM 5601 / CCUG 37298 / CIP 103539 / LMG 7603 / PAl5).